A 921-amino-acid polypeptide reads, in one-letter code: Translation initiation factor IF-2 (921 aa).

3 disordered regions span residues 81 to 118 (AVAESLEEKPAEPVAPAAPTPPEVPAAAPAPPKAAAAP), 175 to 194 (PVVEKPKVPAQPDKPSANQA), and 219 to 301 (VAPA…KKHE). The span at 96-112 (PAAPTPPEVPAAAPAPP) shows a compositional bias: pro residues. Residues 229 to 241 (RPSPAAGAPSRGA) show a composition bias toward low complexity. Positions 292-301 (KKKEQPKKHE) are enriched in basic and acidic residues. The 170-residue stretch at 421–590 (KRPPVVTIMG…LLQADLMELK (170 aa)) folds into the tr-type G domain. Positions 430–437 (GHVDHGKT) are G1. 430-437 (GHVDHGKT) serves as a coordination point for GTP. The interval 455 to 459 (GITQH) is G2. Residues 476–479 (DTPG) form a G3 region. GTP-binding positions include 476–480 (DTPGH) and 530–533 (NKID). The tract at residues 530–533 (NKID) is G4. The tract at residues 566 to 568 (SAK) is G5.

It belongs to the TRAFAC class translation factor GTPase superfamily. Classic translation factor GTPase family. IF-2 subfamily.

Its subcellular location is the cytoplasm. One of the essential components for the initiation of protein synthesis. Protects formylmethionyl-tRNA from spontaneous hydrolysis and promotes its binding to the 30S ribosomal subunits. Also involved in the hydrolysis of GTP during the formation of the 70S ribosomal complex. This chain is Translation initiation factor IF-2, found in Pelobacter propionicus (strain DSM 2379 / NBRC 103807 / OttBd1).